Here is a 133-residue protein sequence, read N- to C-terminus: NADPH-dependent 7-cyano-7-deazaguanine reductase (133 aa).

Residue cysteine 49 is the Thioimide intermediate of the active site. The Proton donor role is filled by aspartate 56. Substrate is bound by residues 71–73 (IEL) and 90–91 (HE).

The protein belongs to the GTP cyclohydrolase I family. QueF type 1 subfamily.

The protein resides in the cytoplasm. The catalysed reaction is 7-aminomethyl-7-carbaguanine + 2 NADP(+) = 7-cyano-7-deazaguanine + 2 NADPH + 3 H(+). Its pathway is tRNA modification; tRNA-queuosine biosynthesis. Functionally, catalyzes the NADPH-dependent reduction of 7-cyano-7-deazaguanine (preQ0) to 7-aminomethyl-7-deazaguanine (preQ1). This chain is NADPH-dependent 7-cyano-7-deazaguanine reductase, found in Leptospira borgpetersenii serovar Hardjo-bovis (strain JB197).